The sequence spans 314 residues: Lipid A biosynthesis acyltransferase 2 (314 aa).

Residues 17-37 (LSPVYWFTWFVLGMIAGISMF) form a helical membrane-spanning segment. An HXXXXD motif motif is present at residues 137 to 142 (HGWSVD).

This sequence belongs to the LpxL/LpxM/LpxP family. LpxM subfamily.

It is found in the cell inner membrane. The catalysed reaction is an alpha-Kdo-(2-&gt;4)-alpha-Kdo-(2-&gt;6)-(acyl)-lipid IVA + a fatty acyl-[ACP] = an alpha-Kdo-(2-&gt;4)-alpha-Kdo-(2-&gt;6)-lipid A + holo-[ACP]. It functions in the pathway glycolipid biosynthesis; KDO(2)-lipid A biosynthesis; KDO(2)-lipid A from CMP-3-deoxy-D-manno-octulosonate and lipid IV(A): step 4/4. It participates in bacterial outer membrane biogenesis; lipopolysaccharide biosynthesis. Functionally, catalyzes the transfer of an acyl chain from an acyl-[acyl-carrier-protein] (ACP) to a Kdo(2)-(acyl)-lipid IV(A) to form a Kdo(2)-lipid A. In Shigella flexneri, this protein is Lipid A biosynthesis acyltransferase 2.